An 879-amino-acid polypeptide reads, in one-letter code: Alanine--tRNA ligase (879 aa).

Zn(2+) contacts are provided by histidine 566, histidine 570, cysteine 668, and histidine 672.

It belongs to the class-II aminoacyl-tRNA synthetase family. Zn(2+) serves as cofactor.

It localises to the cytoplasm. The enzyme catalyses tRNA(Ala) + L-alanine + ATP = L-alanyl-tRNA(Ala) + AMP + diphosphate. In terms of biological role, catalyzes the attachment of alanine to tRNA(Ala) in a two-step reaction: alanine is first activated by ATP to form Ala-AMP and then transferred to the acceptor end of tRNA(Ala). Also edits incorrectly charged Ser-tRNA(Ala) and Gly-tRNA(Ala) via its editing domain. The sequence is that of Alanine--tRNA ligase from Listeria innocua serovar 6a (strain ATCC BAA-680 / CLIP 11262).